The following is a 394-amino-acid chain: Elongation factor Tu (394 aa).

Positions 10–204 (KPHVNVGTIG…ALDSYIPEPE (195 aa)) constitute a tr-type G domain. The G1 stretch occupies residues 19–26 (GHVDHGKT). 19–26 (GHVDHGKT) contributes to the GTP binding site. Thr-26 provides a ligand contact to Mg(2+). A G2 region spans residues 60-64 (GITIN). The G3 stretch occupies residues 81-84 (DCPG). Residues 81–85 (DCPGH) and 136–139 (NKCD) contribute to the GTP site. Positions 136-139 (NKCD) are G4. The segment at 174-176 (SAL) is G5.

The protein belongs to the TRAFAC class translation factor GTPase superfamily. Classic translation factor GTPase family. EF-Tu/EF-1A subfamily. In terms of assembly, monomer.

The protein resides in the cytoplasm. The catalysed reaction is GTP + H2O = GDP + phosphate + H(+). GTP hydrolase that promotes the GTP-dependent binding of aminoacyl-tRNA to the A-site of ribosomes during protein biosynthesis. In Shewanella amazonensis (strain ATCC BAA-1098 / SB2B), this protein is Elongation factor Tu.